Consider the following 121-residue polypeptide: Basic phospholipase A2 BmTX-I (121 aa).

Intrachain disulfides connect Cys26-Cys114, Cys28-Cys45, Cys44-Cys95, Cys50-Cys121, Cys51-Cys88, Cys58-Cys82, and Cys76-Cys86. The Ca(2+) site is built by Tyr27, Gly29, and Gly31. The active site involves His48. Residue Asp49 coordinates Ca(2+). Residue Asp89 is part of the active site.

Requires Ca(2+) as cofactor. As to expression, expressed by the venom gland.

The protein localises to the secreted. The enzyme catalyses a 1,2-diacyl-sn-glycero-3-phosphocholine + H2O = a 1-acyl-sn-glycero-3-phosphocholine + a fatty acid + H(+). Its activity is regulated as follows. Inhibited by magnesium, cadmium and manganese ions. Also inhibited by crotapotin. Functionally, snake venom phospholipase A2 (PLA2) that shows enzymatic activity in the presence of a synthetic substrate. In vitro, blocks the neuromuscular transmission in young chick biventer cervicis preparations. In mice, induces myonecrosis and a systemic interleukin-6 response upon intramuscular injection. Also induces edema and exerts a strong pro-inflammatory effect. PLA2 catalyzes the calcium-dependent hydrolysis of the 2-acyl groups in 3-sn-phosphoglycerides. In Bothrops moojeni (Lance-headed viper), this protein is Basic phospholipase A2 BmTX-I.